The sequence spans 229 residues: Putative N-acetylmannosamine-6-phosphate 2-epimerase (229 aa).

This sequence belongs to the NanE family.

It catalyses the reaction an N-acyl-D-glucosamine 6-phosphate = an N-acyl-D-mannosamine 6-phosphate. It participates in amino-sugar metabolism; N-acetylneuraminate degradation; D-fructose 6-phosphate from N-acetylneuraminate: step 3/5. Functionally, converts N-acetylmannosamine-6-phosphate (ManNAc-6-P) to N-acetylglucosamine-6-phosphate (GlcNAc-6-P). The polypeptide is Putative N-acetylmannosamine-6-phosphate 2-epimerase (Escherichia fergusonii (strain ATCC 35469 / DSM 13698 / CCUG 18766 / IAM 14443 / JCM 21226 / LMG 7866 / NBRC 102419 / NCTC 12128 / CDC 0568-73)).